A 201-amino-acid polypeptide reads, in one-letter code: Large ribosomal subunit protein uL4 (201 aa).

Residues 42–67 (GNSAQKTRSEVSGGGKKPWNQKGTGR) form a disordered region.

Belongs to the universal ribosomal protein uL4 family. Part of the 50S ribosomal subunit.

One of the primary rRNA binding proteins, this protein initially binds near the 5'-end of the 23S rRNA. It is important during the early stages of 50S assembly. It makes multiple contacts with different domains of the 23S rRNA in the assembled 50S subunit and ribosome. Its function is as follows. Forms part of the polypeptide exit tunnel. The polypeptide is Large ribosomal subunit protein uL4 (Legionella pneumophila (strain Paris)).